Consider the following 382-residue polypeptide: ATP phosphoribosyltransferase regulatory subunit (382 aa).

Belongs to the class-II aminoacyl-tRNA synthetase family. HisZ subfamily. In terms of assembly, heteromultimer composed of HisG and HisZ subunits.

It localises to the cytoplasm. It participates in amino-acid biosynthesis; L-histidine biosynthesis; L-histidine from 5-phospho-alpha-D-ribose 1-diphosphate: step 1/9. Functionally, required for the first step of histidine biosynthesis. May allow the feedback regulation of ATP phosphoribosyltransferase activity by histidine. The chain is ATP phosphoribosyltransferase regulatory subunit from Lacticaseibacillus casei (strain BL23) (Lactobacillus casei).